The following is a 101-amino-acid chain: Small ribosomal subunit protein bS21 (101 aa).

A compositionally biased stretch (basic and acidic residues) spans 36 to 52 (YEKPSEKKAREKAEAVR). The tract at residues 36-101 (YEKPSEKKAR…GPGAGPRGPR (66 aa)) is disordered. The span at 53-62 (RARKLARKKL) shows a compositional bias: basic residues. The span at 83 to 101 (PGAGGPGAGGPGAGPRGPR) shows a compositional bias: gly residues.

Belongs to the bacterial ribosomal protein bS21 family.

This is Small ribosomal subunit protein bS21 from Rhodopseudomonas palustris (strain HaA2).